The following is a 128-amino-acid chain: Methylglyoxal synthase (128 aa).

An MGS-like domain is found at 1-128; it reads MRIALIAHDR…MQDHPGNRQA (128 aa). Substrate contacts are provided by residues H8, K12, 34–37, and 54–55; these read TGTT and SG. Residue D60 is the Proton donor/acceptor of the active site. Residue H87 coordinates substrate.

This sequence belongs to the methylglyoxal synthase family.

It catalyses the reaction dihydroxyacetone phosphate = methylglyoxal + phosphate. Functionally, catalyzes the formation of methylglyoxal from dihydroxyacetone phosphate. The sequence is that of Methylglyoxal synthase from Moorella thermoacetica (strain ATCC 39073 / JCM 9320).